We begin with the raw amino-acid sequence, 100 residues long: C-X-C motif chemokine 3 (100 aa).

The N-terminal stretch at M1–A31 is a signal peptide. 2 cysteine pairs are disulfide-bonded: C36–C62 and C38–C78.

This sequence belongs to the intercrine alpha (chemokine CxC) family.

It localises to the secreted. In terms of biological role, ligand for CXCR2. Has chemotactic activity for neutrophils. May play a role in inflammation and exert its effects on endothelial cells in an autocrine fashion. This is C-X-C motif chemokine 3 from Mus musculus (Mouse).